The chain runs to 1703 residues: Mediator of RNA polymerase II transcription subunit 14 (1703 aa).

Residues 755-766 (LSQTADLATSSA) show a composition bias toward polar residues. Residues 755 to 781 (LSQTADLATSSAGPLLRKDQKPRKRSA) form a disordered region.

It belongs to the Mediator complex subunit 14 family. Component of the Mediator complex. Interacts with CDKE-1, HDA19 and LUG. Interacts with PTAC12/HMR/PAP5 and PIF4. As to expression, expressed in roots, stems, developing embryos, young leaf primordia, shoot apical meristems, inflorescence meristems, tapetum in anthers, ovules and floral organ primordia, but not in mature organs.

The protein resides in the nucleus. Functionally, component of the Mediator complex, a coactivator involved in the regulated transcription of nearly all RNA polymerase II-dependent genes. Mediator functions as a bridge to convey information from gene-specific regulatory proteins to the basal RNA polymerase II transcription machinery. The Mediator complex, having a compact conformation in its free form, is recruited to promoters by direct interactions with regulatory proteins and serves for the assembly of a functional pre-initiation complex with RNA polymerase II and the general transcription factors. Binds to G-box (5'-CACGTG-3')-containing regions of target genes promoters (e.g. IAA29 and IAA19). Involved in defining the duration of cell proliferation. Element of a PIF4/HMR/MED14-dependent thermoresponsive process; required for thermomorphogenetic hypocotyl growth in response to daytime warm temperature elicitation by associating to the promoters of thermoresponsive growth-relevant genes (e.g. mainly involved in biosynthesis and signaling of the phytohormone auxin); this also process implies PIF4 and its transcriptional coactivator PTAC12/HMR/PAP5 to promote the expression of target genes. The chain is Mediator of RNA polymerase II transcription subunit 14 from Arabidopsis thaliana (Mouse-ear cress).